The following is a 251-amino-acid chain: Probable transcriptional regulatory protein Pmob_0807 (251 aa).

The tract at residues 1–22 is disordered; sequence MSGHNKWANIKHRKGAQDAKRS.

This sequence belongs to the TACO1 family.

The protein localises to the cytoplasm. The chain is Probable transcriptional regulatory protein Pmob_0807 from Petrotoga mobilis (strain DSM 10674 / SJ95).